Reading from the N-terminus, the 90-residue chain is Probable Fe(2+)-trafficking protein (90 aa).

It belongs to the Fe(2+)-trafficking protein family.

Its function is as follows. Could be a mediator in iron transactions between iron acquisition and iron-requiring processes, such as synthesis and/or repair of Fe-S clusters in biosynthetic enzymes. This chain is Probable Fe(2+)-trafficking protein, found in Colwellia psychrerythraea (strain 34H / ATCC BAA-681) (Vibrio psychroerythus).